We begin with the raw amino-acid sequence, 51 residues long: Large ribosomal subunit protein eL39 (51 aa).

The protein belongs to the eukaryotic ribosomal protein eL39 family. Interacts with YIH1.

The chain is Large ribosomal subunit protein eL39 (RPL39) from Kluyveromyces marxianus (Yeast).